Here is a 271-residue protein sequence, read N- to C-terminus: Ribose-phosphate pyrophosphokinase 2 (271 aa).

Residues 34–36 (DGE) and 82–83 (RQ) contribute to the ATP site. Mg(2+) is bound by residues histidine 115 and aspartate 150. Lysine 173 is a catalytic residue. D-ribose 5-phosphate contacts are provided by residues arginine 175, aspartate 199, and 203-207 (STGGT).

It belongs to the ribose-phosphate pyrophosphokinase family. Class III (archaeal) subfamily. Requires Mg(2+) as cofactor.

The protein resides in the cytoplasm. It carries out the reaction D-ribose 5-phosphate + ATP = 5-phospho-alpha-D-ribose 1-diphosphate + AMP + H(+). It functions in the pathway metabolic intermediate biosynthesis; 5-phospho-alpha-D-ribose 1-diphosphate biosynthesis; 5-phospho-alpha-D-ribose 1-diphosphate from D-ribose 5-phosphate (route I): step 1/1. In terms of biological role, involved in the biosynthesis of the central metabolite phospho-alpha-D-ribosyl-1-pyrophosphate (PRPP) via the transfer of pyrophosphoryl group from ATP to 1-hydroxyl of ribose-5-phosphate (Rib-5-P). In Archaeoglobus fulgidus (strain ATCC 49558 / DSM 4304 / JCM 9628 / NBRC 100126 / VC-16), this protein is Ribose-phosphate pyrophosphokinase 2.